A 68-amino-acid polypeptide reads, in one-letter code: Copper transport protein ATOX1 (68 aa).

The HMA domain maps to 1 to 63 (MPKHEFSVDM…TLEKTGKAVS (63 aa)). Positions 12 and 15 each coordinate Cu cation. Serine 47 is subject to Phosphoserine. Lysine 60 is subject to N6-acetyllysine.

The protein belongs to the ATX1 family. As to quaternary structure, homodimer. Interacts with ATP7B. Interacts with ATP7A. Interacts (via dimer form) with SLC31A1 (via C-terminal domain); this interaction improves ATOX1 stability and controls intracellular Cu(I) levels.

Functionally, binds and deliver cytosolic copper to the copper ATPase proteins. May be important in cellular antioxidant defense. The protein is Copper transport protein ATOX1 of Canis lupus familiaris (Dog).